We begin with the raw amino-acid sequence, 213 residues long: 5-methylthioribulose-1-phosphate/5-deoxyribulose-1-phosphate aldolase (213 aa).

Glutamate 73 (proton donor/acceptor) is an active-site residue. Co(2+)-binding residues include glutamate 73, histidine 92, histidine 94, and histidine 155.

The protein belongs to the aldolase class II family. Co(2+) is required as a cofactor.

The enzyme catalyses 5-(methylsulfanyl)-D-ribulose 1-phosphate = 2-(methylsulfanyl)acetaldehyde + dihydroxyacetone phosphate. It catalyses the reaction 5-deoxy-D-ribulose 1-phosphate = dihydroxyacetone phosphate + acetaldehyde. It functions in the pathway amino-acid biosynthesis; L-methionine biosynthesis via salvage pathway. In terms of biological role, uses 5-methylthioribulose-1-phosphate to yield 2-(methylthio)acetaldehyde and dihydroxyacetone phosphate. Can also use 5-deoxyribulose 1-phosphate to yield acetaldehyde and dihydroxyacetone phosphate. Part of a bifunctional DHAP-shunt salvage pathway for SAM by-products. The sequence is that of 5-methylthioribulose-1-phosphate/5-deoxyribulose-1-phosphate aldolase from Escherichia coli O45:K1 (strain S88 / ExPEC).